The following is a 31-amino-acid chain: Cytochrome b6-f complex subunit 6 (31 aa).

The chain crosses the membrane as a helical span at residues 4–24 (LTSYFGFLLAALTITPALFIG).

It belongs to the PetL family. The 4 large subunits of the cytochrome b6-f complex are cytochrome b6, subunit IV (17 kDa polypeptide, PetD), cytochrome f and the Rieske protein, while the 4 small subunits are PetG, PetL, PetM and PetN. The complex functions as a dimer.

It is found in the plastid. The protein resides in the chloroplast thylakoid membrane. In terms of biological role, component of the cytochrome b6-f complex, which mediates electron transfer between photosystem II (PSII) and photosystem I (PSI), cyclic electron flow around PSI, and state transitions. PetL is important for photoautotrophic growth as well as for electron transfer efficiency and stability of the cytochrome b6-f complex. The sequence is that of Cytochrome b6-f complex subunit 6 from Agrostis stolonifera (Creeping bentgrass).